We begin with the raw amino-acid sequence, 205 residues long: Keratin-associated protein 4-6 (205 aa).

30 consecutive repeat copies span residues C20–S24, C25–T29, C30–T34, C35–S39, C40–S44, C45–Q49, C50–V54, C55–T59, C60–S64, C65–S68, C69–T73, C74–T78, C79–S83, C84–S88, C89–Q93, C94–V98, C99–T103, C104–S108, C114–S118, C119–R123, C124–Q128, C129–V133, C134–T138, C139–S143, C144–S148, C149–S153, C154–S158, C159–C163, C164–C168, and C169–P173. Residues C20–P173 are 30 X 5 AA repeats of C-C-[IRQVEL]-[SPTR]-[STVQRCP].

The protein belongs to the KRTAP type 4 family. As to quaternary structure, interacts with hair keratins. In terms of tissue distribution, expressed in the hair follicles.

In terms of biological role, in the hair cortex, hair keratin intermediate filaments are embedded in an interfilamentous matrix, consisting of hair keratin-associated proteins (KRTAP), which are essential for the formation of a rigid and resistant hair shaft through their extensive disulfide bond cross-linking with abundant cysteine residues of hair keratins. The matrix proteins include the high-sulfur and high-glycine-tyrosine keratins. In Homo sapiens (Human), this protein is Keratin-associated protein 4-6 (KRTAP4-6).